A 276-amino-acid chain; its full sequence is Lyso-ornithine lipid O-acyltransferase (276 aa).

A helical membrane pass occupies residues 25-47; that stretch reads LALRGGAMALVLMAGLTLHLAVR.

The protein belongs to the 1-acyl-sn-glycerol-3-phosphate acyltransferase family. OlsA subfamily.

The protein localises to the membrane. The enzyme catalyses a lyso-ornithine lipid + a fatty acyl-[ACP] = an N(2)-[(3R)-3-(acyloxy)acyl]-L-ornithine lipid + holo-[ACP]. It carries out the reaction a fatty acyl-[ACP] + a 1-acyl-sn-glycero-3-phosphate = a 1,2-diacyl-sn-glycero-3-phosphate + holo-[ACP]. It participates in lipid metabolism. The protein operates within phospholipid metabolism. In terms of biological role, catalyzes the second step in the formation of ornithine lipids, which are phosphorus-free membrane lipids. Uses acyl-acyl carrier protein (acyl-AcpP) as an acyl donor and converts lyso-ornithine lipid (LOL) into ornithine lipid (OL). It can also act as an alternate acyl-sn-glycerol-3-phosphate acyltransferase (AGPAT) to ensure glycerophospholipid production. The sequence is that of Lyso-ornithine lipid O-acyltransferase from Rhodobacter capsulatus (strain ATCC BAA-309 / NBRC 16581 / SB1003).